The following is a 65-amino-acid chain: Beta-toxin Tf4a (65 aa).

Positions Lys2–Gly63 constitute an LCN-type CS-alpha/beta domain. Cystine bridges form between Cys12-Cys62, Cys16-Cys38, Cys24-Cys43, and Cys28-Cys45. Residue Cys62 is modified to Cysteine amide.

Belongs to the long (4 C-C) scorpion toxin superfamily. Sodium channel inhibitor family. Alpha subfamily. In terms of tissue distribution, expressed by the venom gland.

The protein resides in the secreted. Alpha toxins bind voltage-independently at site-3 of sodium channels (Nav) and inhibit the inactivation of the activated channels, thereby blocking neuronal transmission. This toxin is toxic to frogs but non-toxic to insect larvae (T.molitor), mammals (rats) and crustaceans (crabs) at the doses assayed. The chain is Beta-toxin Tf4a from Tityus fasciolatus (Central Brazilian scorpion).